The primary structure comprises 507 residues: Phospho-2-dehydro-3-deoxyheptonate aldolase 2, chloroplastic (507 aa).

Belongs to the class-II DAHP synthase family.

The protein localises to the plastid. Its subcellular location is the chloroplast. It catalyses the reaction D-erythrose 4-phosphate + phosphoenolpyruvate + H2O = 7-phospho-2-dehydro-3-deoxy-D-arabino-heptonate + phosphate. The protein operates within metabolic intermediate biosynthesis; chorismate biosynthesis; chorismate from D-erythrose 4-phosphate and phosphoenolpyruvate: step 1/7. This is Phospho-2-dehydro-3-deoxyheptonate aldolase 2, chloroplastic (DHS2) from Arabidopsis thaliana (Mouse-ear cress).